The chain runs to 514 residues: Serine/threonine protein phosphatase PstP (514 aa).

Topologically, residues 1–302 (MARVTLVLRY…RPRWSGRRLA (302 aa)) are cytoplasmic. The PPM-type phosphatase domain occupies 9 to 238 (RYAARSDRGL…DNVTVVVADV (230 aa)). Residues Asp-38, Gly-39, Asp-118, Ser-160, Asp-191, and Asp-229 each contribute to the Mn(2+) site. Residues 303–323 (FVVALVTVLMTAGLLIGRAII) traverse the membrane as a helical segment. The Extracellular segment spans residues 324-514 (RSNYYVADYA…QPGIDCRAAA (191 aa)). A disordered region spans residues 420–514 (LLPPCPAPRA…QPGIDCRAAA (95 aa)). Positions 440–480 (TTSETTEPNVTSSPASPSPTTSASAPTGTTPAIPTSASPAA) are enriched in low complexity.

The cofactor is Mn(2+).

The protein resides in the cell membrane. It catalyses the reaction O-phospho-L-seryl-[protein] + H2O = L-seryl-[protein] + phosphate. It carries out the reaction O-phospho-L-threonyl-[protein] + H2O = L-threonyl-[protein] + phosphate. In terms of biological role, plays an important role in regulating cell division and growth by reversible phosphorylation signaling. May play important roles in regulating cellular metabolism and signaling pathways, which could mediate the growth and development of the cell. Plays a role in establishing and maintaining infection. The polypeptide is Serine/threonine protein phosphatase PstP (pstP) (Mycobacterium tuberculosis (strain CDC 1551 / Oshkosh)).